Here is a 105-residue protein sequence, read N- to C-terminus: uncharacterized protein (105 aa).

A helical transmembrane segment spans residues 4–26 (TQILLILFVGILVTTPHDIFIII).

Its subcellular location is the membrane. This is an uncharacterized protein from Rickettsia conorii (strain ATCC VR-613 / Malish 7).